Consider the following 249-residue polypeptide: Large ribosomal subunit protein uL4 (249 aa).

This sequence belongs to the universal ribosomal protein uL4 family. Part of the 50S ribosomal subunit.

Functionally, one of the primary rRNA binding proteins, this protein initially binds near the 5'-end of the 23S rRNA. It is important during the early stages of 50S assembly. It makes multiple contacts with different domains of the 23S rRNA in the assembled 50S subunit and ribosome. In terms of biological role, forms part of the polypeptide exit tunnel. This Methanospirillum hungatei JF-1 (strain ATCC 27890 / DSM 864 / NBRC 100397 / JF-1) protein is Large ribosomal subunit protein uL4.